Reading from the N-terminus, the 257-residue chain is Neurotrophin-3 (257 aa).

Residues 1-18 form the signal peptide; the sequence is MSILFYVIFLAYLRGIQS. The propeptide occupies 19–138; that stretch reads TNMDQRSLPE…VLNRTSRRKR (120 aa). N-linked (GlcNAc...) asparagine glycosylation is present at Asn131. 3 disulfide bridges follow: Cys152-Cys217, Cys195-Cys246, and Cys205-Cys248.

Belongs to the NGF-beta family. In terms of tissue distribution, in the embryo, the expression peak at E4.5 and decreases at later stages of development.

The protein resides in the secreted. Its function is as follows. Seems to promote the survival of visceral and proprioceptive sensory neurons. This chain is Neurotrophin-3 (NTF3), found in Gallus gallus (Chicken).